The primary structure comprises 284 residues: Bifunctional protein FolD (284 aa).

NADP(+) contacts are provided by residues 164 to 166 (GRS) and Ser189.

This sequence belongs to the tetrahydrofolate dehydrogenase/cyclohydrolase family. Homodimer.

It carries out the reaction (6R)-5,10-methylene-5,6,7,8-tetrahydrofolate + NADP(+) = (6R)-5,10-methenyltetrahydrofolate + NADPH. It catalyses the reaction (6R)-5,10-methenyltetrahydrofolate + H2O = (6R)-10-formyltetrahydrofolate + H(+). It participates in one-carbon metabolism; tetrahydrofolate interconversion. In terms of biological role, catalyzes the oxidation of 5,10-methylenetetrahydrofolate to 5,10-methenyltetrahydrofolate and then the hydrolysis of 5,10-methenyltetrahydrofolate to 10-formyltetrahydrofolate. The sequence is that of Bifunctional protein FolD from Listeria innocua serovar 6a (strain ATCC BAA-680 / CLIP 11262).